Here is a 168-residue protein sequence, read N- to C-terminus: Phosphopantetheine adenylyltransferase (168 aa).

Thr-9 is a binding site for substrate. Residues 9-10 (TF) and His-17 each bind ATP. Residues Lys-41, Leu-74, and Arg-88 each coordinate substrate. ATP is bound by residues 89-91 (GLR), Glu-99, and 124-130 (LQPIASR).

It belongs to the bacterial CoaD family. Homohexamer. Mg(2+) is required as a cofactor.

The protein resides in the cytoplasm. It carries out the reaction (R)-4'-phosphopantetheine + ATP + H(+) = 3'-dephospho-CoA + diphosphate. The protein operates within cofactor biosynthesis; coenzyme A biosynthesis; CoA from (R)-pantothenate: step 4/5. In terms of biological role, reversibly transfers an adenylyl group from ATP to 4'-phosphopantetheine, yielding dephospho-CoA (dPCoA) and pyrophosphate. The chain is Phosphopantetheine adenylyltransferase from Sphingopyxis alaskensis (strain DSM 13593 / LMG 18877 / RB2256) (Sphingomonas alaskensis).